A 211-amino-acid polypeptide reads, in one-letter code: Probable nicotinate-nucleotide adenylyltransferase (211 aa).

Belongs to the NadD family.

It catalyses the reaction nicotinate beta-D-ribonucleotide + ATP + H(+) = deamido-NAD(+) + diphosphate. It participates in cofactor biosynthesis; NAD(+) biosynthesis; deamido-NAD(+) from nicotinate D-ribonucleotide: step 1/1. Functionally, catalyzes the reversible adenylation of nicotinate mononucleotide (NaMN) to nicotinic acid adenine dinucleotide (NaAD). The polypeptide is Probable nicotinate-nucleotide adenylyltransferase (Legionella pneumophila (strain Paris)).